Reading from the N-terminus, the 182-residue chain is NADH-quinone oxidoreductase subunit B (182 aa).

[4Fe-4S] cluster is bound by residues Cys47, Cys48, Cys113, and Cys142.

The protein belongs to the complex I 20 kDa subunit family. NDH-1 is composed of 14 different subunits. Subunits NuoB, C, D, E, F, and G constitute the peripheral sector of the complex. [4Fe-4S] cluster serves as cofactor.

The protein resides in the cell inner membrane. It catalyses the reaction a quinone + NADH + 5 H(+)(in) = a quinol + NAD(+) + 4 H(+)(out). In terms of biological role, NDH-1 shuttles electrons from NADH, via FMN and iron-sulfur (Fe-S) centers, to quinones in the respiratory chain. The immediate electron acceptor for the enzyme in this species is believed to be ubiquinone. Couples the redox reaction to proton translocation (for every two electrons transferred, four hydrogen ions are translocated across the cytoplasmic membrane), and thus conserves the redox energy in a proton gradient. This Anaeromyxobacter dehalogenans (strain 2CP-1 / ATCC BAA-258) protein is NADH-quinone oxidoreductase subunit B.